Consider the following 34-residue polypeptide: Crassicorin-II (34 aa).

Cysteines 6 and 30 form a disulfide.

As to expression, highly expressed by the mesenteries. Moderately expressed by the pharynx. Weakly expressed by the gonad and pedal disk. No expression in tentacle.

It localises to the secreted. Its subcellular location is the nematocyst. Peptide with both antimicrobial and neurotoxin activities. Cationic AMP with antimicrobial activity against both Gram-positive bacteria (B.subtilis) and Gram-negative bacteria (E.coli and S.enterica). Shows no significant antimicrobial activity against bacteria S.aureus and P.aeruginosa, as well as the fungus C.albicans. In vivo, induces reversible paralytic activity towards the shrimp P.paucidens. May act by impairing sodium or potassium channels in the prey. The protein is Crassicorin-II of Urticina crassicornis (Mottled anemone).